A 327-amino-acid polypeptide reads, in one-letter code: MAVPAKKRKMNFSEREVEIIVEELELKKHLLVNHFNAGVPLAAKSAAWHGILRRVNAVATCRRELPEVKKKWSDLKTEVRRKVAQVRAAVEGGEAPGPTEDDGAGGPGTGSGSGGSGTAIAPVLLTPMQQRICNLLGEATIISLPSTTEIHPVALGSTATTAAATVTLTQIPTETTYHTLEEGVVEYCTAEAPPPLPTEAPVEMIAQPPDTSVKPQALKSRIALNSAKLIQEQRVTNLHIKEIAQHLEQQNGLLQMIRRSQEVQACAQERQAQAMEGTQAALSVLIQVLRPMIKDFRRYLQNNTPNPAPASAPGPVAQNGQPDSIIQ.

The tract at residues methionine 1–lysine 70 is required for nuclear localization and apoptosis-inducing activity. 2 disordered regions span residues arginine 87–threonine 118 and glutamine 301–glutamine 327. Over residues alanine 104–glycine 117 the composition is skewed to gly residues. The segment covering glutamine 318–glutamine 327 has biased composition (polar residues).

The protein belongs to the NAIF1 family. Interacts with HARBI1.

It localises to the nucleus. In terms of biological role, induces apoptosis. In Mus musculus (Mouse), this protein is Nuclear apoptosis-inducing factor 1 (Naif1).